The primary structure comprises 442 residues: MNFFMEKNKDAGHRVTIKIPKTTVNNSLLQEFIKIRKTTKINGFRKGKTPIRVIQEKYGSAIYYDIFKKLMQKFFHEFIKTEKIKIIGSPKFYIHQDEDKKKEYFEYSVIYELYPQFQIKDIKQIKVNKINVEITEEDIKKNIETNKNKKNIWNPVNKAVKSYDRVTINYCIYEKNKKIKKFDKDNISFIVSKNTLIPQLNYKIINHFVNDIIFFKIKFHAFHPEKELQNKDITFKIKIIKIEKKQELESEKSNKKNITEKKTIQTDYQTIKNNLHSQINIITDKYLENQIIQKIVEKNILLLPPLLFQKEIKNLYKQYTKQYQEENSNILEKKYHMSLDSEVKKRLYFQIIIEQIILNNKLFADENNIQKLIKKISSNYKNPMEIIKLYNKNKNLKNTMKNIELERQAMLLLKKSIKIEKQNWNFERFLNYNWASHEELML.

The PPIase FKBP-type domain occupies 163-248; that stretch reads YDRVTINYCI…IIKIEKKQEL (86 aa).

Belongs to the FKBP-type PPIase family. Tig subfamily.

The protein localises to the cytoplasm. The enzyme catalyses [protein]-peptidylproline (omega=180) = [protein]-peptidylproline (omega=0). Functionally, involved in protein export. Acts as a chaperone by maintaining the newly synthesized protein in an open conformation. Functions as a peptidyl-prolyl cis-trans isomerase. In Buchnera aphidicola subsp. Acyrthosiphon pisum (strain APS) (Acyrthosiphon pisum symbiotic bacterium), this protein is Trigger factor (tig).